We begin with the raw amino-acid sequence, 196 residues long: Small ribosomal subunit protein uS4c (196 aa).

Residues 89–149 (MRLDNILFRL…DKQRSKALIQ (61 aa)) form the S4 RNA-binding domain.

This sequence belongs to the universal ribosomal protein uS4 family. As to quaternary structure, part of the 30S ribosomal subunit. Contacts protein S5. The interaction surface between S4 and S5 is involved in control of translational fidelity.

Its subcellular location is the plastid. The protein localises to the chloroplast. Its function is as follows. One of the primary rRNA binding proteins, it binds directly to 16S rRNA where it nucleates assembly of the body of the 30S subunit. With S5 and S12 plays an important role in translational accuracy. The sequence is that of Small ribosomal subunit protein uS4c (rps4) from Asparagus maritimus (Sea asparagus).